A 111-amino-acid polypeptide reads, in one-letter code: Protein YibV (111 aa).

The polypeptide is Protein YibV (yibV) (Escherichia coli O157:H7).